We begin with the raw amino-acid sequence, 467 residues long: GTPase Der (467 aa).

2 EngA-type G domains span residues 3–167 and 179–352; these read PTLV…PYEE and PVIA…AAAR. Residues 9–16, 56–60, 119–122, 185–192, 232–236, and 297–300 each bind GTP; these read GRPNVGKS, DTGGF, NKTE, DTAGL, and NKWD. The region spanning 353–437 is the KH-like domain; the sequence is AHIPTPKLTR…PLRVEFRTGH (85 aa). Residues 434–467 form a disordered region; the sequence is RTGHNPYAGKKTPLTEEEARRAHSRRRRNRKKYG. The span at 455-467 shows a compositional bias: basic residues; that stretch reads AHSRRRRNRKKYG.

Belongs to the TRAFAC class TrmE-Era-EngA-EngB-Septin-like GTPase superfamily. EngA (Der) GTPase family. Associates with the 50S ribosomal subunit.

GTPase that plays an essential role in the late steps of ribosome biogenesis. This chain is GTPase Der, found in Nitrosomonas europaea (strain ATCC 19718 / CIP 103999 / KCTC 2705 / NBRC 14298).